The following is a 317-amino-acid chain: ADP-L-glycero-D-manno-heptose-6-epimerase (317 aa).

Residues 10–11 (FI), 31–32 (DD), Lys-38, Lys-53, 76–80 (QGACS), and Asn-93 each bind NADP(+). The active-site Proton acceptor is the Tyr-140. Position 144 (Lys-144) interacts with NADP(+). A substrate-binding site is contributed by Asn-169. The NADP(+) site is built by Ile-170 and Lys-178. Catalysis depends on Lys-178, which acts as the Proton acceptor. Residues Ala-180, His-187, 201-204 (FEGC), Arg-214, and Tyr-278 each bind substrate.

It belongs to the NAD(P)-dependent epimerase/dehydratase family. HldD subfamily. Homopentamer. NADP(+) is required as a cofactor.

The enzyme catalyses ADP-D-glycero-beta-D-manno-heptose = ADP-L-glycero-beta-D-manno-heptose. The protein operates within nucleotide-sugar biosynthesis; ADP-L-glycero-beta-D-manno-heptose biosynthesis; ADP-L-glycero-beta-D-manno-heptose from D-glycero-beta-D-manno-heptose 7-phosphate: step 4/4. Functionally, catalyzes the interconversion between ADP-D-glycero-beta-D-manno-heptose and ADP-L-glycero-beta-D-manno-heptose via an epimerization at carbon 6 of the heptose. This chain is ADP-L-glycero-D-manno-heptose-6-epimerase, found in Nitrosococcus oceani (strain ATCC 19707 / BCRC 17464 / JCM 30415 / NCIMB 11848 / C-107).